The chain runs to 485 residues: MKPTIALVGRPNVGKSTLFNRLTRTKDALVHDLPGLTRDRHYGHGKVGSKPYLVIDTGGFEPVVDSGILHEMAKQTLQAVDEADAVVFLVDGRTGLTPQDKIIADRLRQSPRPVYLAVNKGEGGNRAVLAAEFYELALGDPYVISGAHGDGVYYLIEDILEKFPEPEAEEADARHPVFAVIGRPNVGKSTLVNAILGEERVITFDMAGTTRDSIHIDFEREGKPFTIIDTAGVRRRGKVDEAVEKFSVIKAMQAVEAANVAVLVLDAQQDIADQDATIAGFALEAGRALVVAVNKWDGISEERREQVKRDINRKLYFLDFAKFHFISALKERGIDGLFDSIQAAYNAAMIKMPTPKITRVLQSAIERQQPPRAGLVRPKMRYAHQGGMNPPVIVVHGNSLHAISDSYTRYLTQTFRKAFNLQGTPLRIQYNVSENPYENAEDKPKKKPLRRVSLSNRIEKREGRKEEKNRFKKKTKVSVKKQFSK.

EngA-type G domains lie at 3–167 and 176–349; these read PTIA…PEPE and PVFA…NAAM. GTP is bound by residues 9–16, 56–60, 119–122, 182–189, 229–233, and 294–297; these read GRPNVGKS, DTGGF, NKGE, DTAGV, and NKWD. The KH-like domain occupies 350–434; that stretch reads IKMPTPKITR…PLRIQYNVSE (85 aa). The tract at residues 435-485 is disordered; that stretch reads NPYENAEDKPKKKPLRRVSLSNRIEKREGRKEEKNRFKKKTKVSVKKQFSK. Residues 457–469 are compositionally biased toward basic and acidic residues; sequence RIEKREGRKEEKN. Residues 470-485 are compositionally biased toward basic residues; the sequence is RFKKKTKVSVKKQFSK.

This sequence belongs to the TRAFAC class TrmE-Era-EngA-EngB-Septin-like GTPase superfamily. EngA (Der) GTPase family. In terms of assembly, associates with the 50S ribosomal subunit.

GTPase that plays an essential role in the late steps of ribosome biogenesis. The sequence is that of GTPase Der from Neisseria meningitidis serogroup B (strain ATCC BAA-335 / MC58).